The chain runs to 81 residues: Large ribosomal subunit protein bL31B (81 aa).

It belongs to the bacterial ribosomal protein bL31 family. Type B subfamily. Part of the 50S ribosomal subunit.

This is Large ribosomal subunit protein bL31B from Bacillus cereus (strain G9842).